The sequence spans 905 residues: Tight junction protein ZO-3 (905 aa).

The region spanning 11 to 93 is the PDZ 1 domain; sequence TATLYKDPRR…TANVTVKRPR (83 aa). The tract at residues 92-167 is disordered; that stretch reads PRRVQLPATK…GGGSEANGLD (76 aa). S111 and S128 each carry phosphoserine. A compositionally biased stretch (low complexity) spans 124–133; sequence GDSSSGSGRS. Residues 139–155 show a composition bias toward basic residues; the sequence is RRSRAGRRGRVGSHGRR. 5 positions are modified to phosphoserine: S156, S157, S161, S195, and S311. The 78-residue stretch at 187–264 folds into the PDZ 2 domain; it reads SVLVKRRNSE…ELTLLVLRDS (78 aa). Residues 289-367 form a disordered region; sequence LTSELSQAPP…QSLEDRGYSP (79 aa). Phosphothreonine is present on T317. S319, S343, and S359 each carry phosphoserine. The region spanning 368–434 is the PDZ 3 domain; it reads DTRVVSFPKG…LTREEAVQFL (67 aa). An SH3 domain is found at 464–541; it reads GDSFYIRTHF…PNQSRAEQLA (78 aa). Residues 573–754 enclose the Guanylate kinase-like domain; sequence RRGTKKASTQ…WYQEVKAVIQ (182 aa). S584 is subject to Phosphoserine. 2 disordered regions span residues 773–818 and 850–905; these read EDLD…PQDV and TDKW…ATDL. Residues 851-877 show a composition bias toward basic and acidic residues; that stretch reads DKWETQADSHYTQDQRRQDSMRTYKHE. Phosphoserine occurs at positions 891 and 892.

Belongs to the MAGUK family. As to quaternary structure, interacts with occludin OCLN, claudins and TPJ1. Interacts with PATJ. Interacts with UBN1. Interacts with FASLG. Interacts with CCND1. In terms of processing, phosphorylated. As to expression, is concentrated in various types of epithelium, in tissues such as the lung, liver and kidney, but not in endothelium or at cadherin-based cell-cell adhesion sites.

Its subcellular location is the cell membrane. It is found in the cell junction. It localises to the tight junction. The protein resides in the nucleus. Functionally, tjp1, Tjp2, and Tjp3 are closely related scaffolding proteins that link tight junction (TJ) transmembrane proteins such as claudins, junctional adhesion molecules, and occludin to the actin cytoskeleton. The tight junction acts to limit movement of substances through the paracellular space and as a boundary between the compositionally distinct apical and basolateral plasma membrane domains of epithelial and endothelial cells. Binds and recruits PatJ to tight junctions where it connects and stabilizes apical and lateral components of tight junctions. Promotes cell-cycle progression through the sequestration of cyclin D1 (Ccnd1) at tight junctions during mitosis which prevents Ccnd1 degradation during M-phase and enables S-phase transition. With Tjp1 and Tjp2, participates in the junctional retention and stability of the transcription factor DbpA, but is not involved in its shuttling to the nucleus. Contrary to Tjp2, Tjp3 is dispensable for individual viability, embryonic development, epithelial differentiation, and the establishment of TJs, at least in the laboratory environment. This is Tight junction protein ZO-3 (Tjp3) from Mus musculus (Mouse).